Consider the following 280-residue polypeptide: Large ribosomal subunit protein uL2 (280 aa).

The disordered stretch occupies residues 213 to 280 (RWKGKRPSVR…RRRTGKKHAR (68 aa)). Positions 268–280 (IVRRRRTGKKHAR) are enriched in basic residues.

This sequence belongs to the universal ribosomal protein uL2 family. As to quaternary structure, part of the 50S ribosomal subunit. Forms a bridge to the 30S subunit in the 70S ribosome.

Functionally, one of the primary rRNA binding proteins. Required for association of the 30S and 50S subunits to form the 70S ribosome, for tRNA binding and peptide bond formation. It has been suggested to have peptidyltransferase activity; this is somewhat controversial. Makes several contacts with the 16S rRNA in the 70S ribosome. This chain is Large ribosomal subunit protein uL2, found in Mycobacterium leprae (strain Br4923).